A 23-amino-acid chain; its full sequence is Endochitinase B (23 aa).

This sequence belongs to the glycosyl hydrolase 19 family. Chitinase class I subfamily.

It carries out the reaction Random endo-hydrolysis of N-acetyl-beta-D-glucosaminide (1-&gt;4)-beta-linkages in chitin and chitodextrins.. In terms of biological role, defense against chitin-containing fungal pathogens. In Pisum sativum (Garden pea), this protein is Endochitinase B.